The chain runs to 383 residues: Alkanesulfonate monooxygenase (383 aa).

Belongs to the SsuD family. As to quaternary structure, homotetramer.

It catalyses the reaction an alkanesulfonate + FMNH2 + O2 = an aldehyde + FMN + sulfite + H2O + 2 H(+). Functionally, catalyzes the desulfonation of aliphatic sulfonates. The protein is Alkanesulfonate monooxygenase of Erwinia pyrifoliae (strain DSM 12163 / CIP 106111 / Ep16/96).